A 188-amino-acid polypeptide reads, in one-letter code: Ribosome-recycling factor (188 aa).

The protein belongs to the RRF family.

Its subcellular location is the cytoplasm. Responsible for the release of ribosomes from messenger RNA at the termination of protein biosynthesis. May increase the efficiency of translation by recycling ribosomes from one round of translation to another. In Gluconacetobacter diazotrophicus (strain ATCC 49037 / DSM 5601 / CCUG 37298 / CIP 103539 / LMG 7603 / PAl5), this protein is Ribosome-recycling factor.